The primary structure comprises 119 residues: Ribonuclease P protein component (119 aa).

Belongs to the RnpA family. Consists of a catalytic RNA component (M1 or rnpB) and a protein subunit.

The enzyme catalyses Endonucleolytic cleavage of RNA, removing 5'-extranucleotides from tRNA precursor.. Its function is as follows. RNaseP catalyzes the removal of the 5'-leader sequence from pre-tRNA to produce the mature 5'-terminus. It can also cleave other RNA substrates such as 4.5S RNA. The protein component plays an auxiliary but essential role in vivo by binding to the 5'-leader sequence and broadening the substrate specificity of the ribozyme. The sequence is that of Ribonuclease P protein component from Dictyoglomus turgidum (strain DSM 6724 / Z-1310).